Consider the following 183-residue polypeptide: Threonylcarbamoyl-AMP synthase (183 aa).

Positions 1-183 (MNREQIANAL…LRTNQLFRQG (183 aa)) constitute a YrdC-like domain.

It belongs to the SUA5 family. TsaC subfamily.

It is found in the cytoplasm. The catalysed reaction is L-threonine + hydrogencarbonate + ATP = L-threonylcarbamoyladenylate + diphosphate + H2O. Required for the formation of a threonylcarbamoyl group on adenosine at position 37 (t(6)A37) in tRNAs that read codons beginning with adenine. Catalyzes the conversion of L-threonine, HCO(3)(-)/CO(2) and ATP to give threonylcarbamoyl-AMP (TC-AMP) as the acyladenylate intermediate, with the release of diphosphate. This chain is Threonylcarbamoyl-AMP synthase, found in Haemophilus influenzae (strain PittEE).